The sequence spans 325 residues: UPF0285 protein MmarC5_0962 (325 aa).

This sequence belongs to the UPF0285 family.

This Methanococcus maripaludis (strain C5 / ATCC BAA-1333) protein is UPF0285 protein MmarC5_0962.